We begin with the raw amino-acid sequence, 46 residues long: uncharacterized protein (46 aa).

A disordered region spans residues 1-46 (MEVTPLETGRARSHQKASTAAQPHAADEKMTGSTARRYLSQDHQSV).

This is an uncharacterized protein from Treponema pallidum (strain Nichols).